Reading from the N-terminus, the 492-residue chain is N-succinylglutamate 5-semialdehyde dehydrogenase (492 aa).

220–225 (GSASTG) lines the NAD(+) pocket. Residues Glu243 and Cys277 contribute to the active site.

The protein belongs to the aldehyde dehydrogenase family. AstD subfamily.

It catalyses the reaction N-succinyl-L-glutamate 5-semialdehyde + NAD(+) + H2O = N-succinyl-L-glutamate + NADH + 2 H(+). It functions in the pathway amino-acid degradation; L-arginine degradation via AST pathway; L-glutamate and succinate from L-arginine: step 4/5. Functionally, catalyzes the NAD-dependent reduction of succinylglutamate semialdehyde into succinylglutamate. In Salmonella dublin (strain CT_02021853), this protein is N-succinylglutamate 5-semialdehyde dehydrogenase.